The chain runs to 292 residues: BTB/POZ domain-containing protein KCTD7 (292 aa).

A disordered region spans residues 1–27 (MVVFSAASDSEKPGDAMSGADKGEEEY). The BTB domain maps to 56–144 (IPLNVGGTYF…YAIGPLLENL (89 aa)).

Its subcellular location is the cell membrane. The protein resides in the cytoplasm. The protein localises to the cytosol. In Danio rerio (Zebrafish), this protein is BTB/POZ domain-containing protein KCTD7 (kctd7).